Consider the following 347-residue polypeptide: ATP-dependent kinase YFH7 (347 aa).

Residue 33–41 (GPPGSGKST) coordinates ATP.

This sequence belongs to the YFH7 family.

In terms of biological role, ATP-dependent kinase that could be involved in endoplasmic reticulum membrane assembly. The polypeptide is ATP-dependent kinase YFH7 (YFH7) (Lachancea thermotolerans (strain ATCC 56472 / CBS 6340 / NRRL Y-8284) (Yeast)).